Consider the following 133-residue polypeptide: UPF0225 protein BP2036 (133 aa).

It belongs to the UPF0225 family.

This Bordetella pertussis (strain Tohama I / ATCC BAA-589 / NCTC 13251) protein is UPF0225 protein BP2036.